The sequence spans 283 residues: S-methyl-5'-thioadenosine phosphorylase (283 aa).

Thr18 provides a ligand contact to phosphate. The residue at position 51 (Lys51) is an N6-acetyllysine. Residues 60-61 (RH) and 93-94 (TA) each bind phosphate. Position 196 (Met196) interacts with substrate. Thr197 provides a ligand contact to phosphate. 220–222 (DYD) provides a ligand contact to substrate.

This sequence belongs to the PNP/MTAP phosphorylase family. MTAP subfamily. In terms of assembly, homotrimer.

It is found in the cytoplasm. It localises to the nucleus. It catalyses the reaction S-methyl-5'-thioadenosine + phosphate = 5-(methylsulfanyl)-alpha-D-ribose 1-phosphate + adenine. It participates in amino-acid biosynthesis; L-methionine biosynthesis via salvage pathway; S-methyl-5-thio-alpha-D-ribose 1-phosphate from S-methyl-5'-thioadenosine (phosphorylase route): step 1/1. Catalyzes the reversible phosphorylation of S-methyl-5'-thioadenosine (MTA) to adenine and 5-methylthioribose-1-phosphate. Involved in the breakdown of MTA, a major by-product of polyamine biosynthesis. Responsible for the first step in the methionine salvage pathway after MTA has been generated from S-adenosylmethionine. Has broad substrate specificity with 6-aminopurine nucleosides as preferred substrates. The sequence is that of S-methyl-5'-thioadenosine phosphorylase from Bos taurus (Bovine).